Reading from the N-terminus, the 616-residue chain is UvrABC system protein C (616 aa).

Positions Asn12–Ile97 constitute a GIY-YIG domain. The UVR domain occupies Thr203–Ser238.

The protein belongs to the UvrC family. In terms of assembly, interacts with UvrB in an incision complex.

The protein resides in the cytoplasm. Functionally, the UvrABC repair system catalyzes the recognition and processing of DNA lesions. UvrC both incises the 5' and 3' sides of the lesion. The N-terminal half is responsible for the 3' incision and the C-terminal half is responsible for the 5' incision. This chain is UvrABC system protein C, found in Aliarcobacter butzleri (strain RM4018) (Arcobacter butzleri).